The chain runs to 466 residues: 55 kDa erythrocyte membrane protein (466 aa).

N-acetylthreonine is present on Thr2. Ser13 and Ser19 each carry phosphoserine. Position 49 is a phosphothreonine (Thr49). Residues Ser52, Ser57, and Ser110 each carry the phosphoserine modification. Positions 71–152 constitute a PDZ domain; sequence LIQFEKVTEE…MISLKVIPNQ (82 aa). The 71-residue stretch at 158–228 folds into the SH3 domain; the sequence is ALQMFMRAQF…PSPELQEWRV (71 aa). Ser243 bears the Phosphoserine mark. An interaction with PALS1 region spans residues 268–466; it reads VVSYEEVVRL…PQWVPVSWVY (199 aa). One can recognise a Guanylate kinase-like domain in the interval 282-451; sequence RKTLVLIGAS…TLKKLQEAFD (170 aa).

This sequence belongs to the MAGUK family. Heterodimer with PALS1. Interacts with DLG5 and NF2. Interacts (via guanylate kinase-like domain) with WHRN (via third PDZ domain). Palmitoylated. As to expression, ubiquitous.

The protein localises to the cell membrane. It localises to the cell projection. Its subcellular location is the stereocilium. In terms of biological role, essential regulator of neutrophil polarity. Regulates neutrophil polarization by regulating AKT1 phosphorylation through a mechanism that is independent of PIK3CG activity. In Homo sapiens (Human), this protein is 55 kDa erythrocyte membrane protein (MPP1).